The chain runs to 1024 residues: Importin-8 (1024 aa).

One can recognise an Importin N-terminal domain in the interval 22-102 (AENELNQSYK…RENMVEAIIR (81 aa)). Residues 896–969 (FGRAQGSEEE…YSTPLDCDNG (74 aa)) are disordered. 2 stretches are compositionally biased toward acidic residues: residues 902–917 (SEEE…EDEV) and 934–952 (DNED…DEGL).

It belongs to the importin beta family.

It localises to the cytoplasm. Its subcellular location is the nucleus. In terms of biological role, involved in nuclear protein import, either by acting as autonomous nuclear transport receptor or as an adapter-like protein in association with the importin-beta subunit KPNB1. Acting autonomously, may serve as receptor for nuclear localization signals (NLS) and promote translocation of import substrates through the nuclear pore complex (NPC) by an energy requiring, Ran-dependent mechanism. At the nucleoplasmic side of the NPC, Ran binds to importin, the importin/substrate complex dissociates and importin is re-exported from the nucleus to the cytoplasm where GTP hydrolysis releases Ran. The directionality of nuclear import is thought to be conferred by an asymmetric distribution of the GTP- and GDP-bound forms of Ran between the cytoplasm and nucleus. In vitro mediates the nuclear import of the signal recognition particle protein SRP19. May also be involved in cytoplasm-to-nucleus shuttling of a broad spectrum of other cargos, including Argonaute-microRNAs complexes, the JUN protein, RELA/NF-kappa-B p65 subunit, the translation initiation factor EIF4E and a set of receptor-activated mothers against decapentaplegic homolog (SMAD) transcription factors that play a critical role downstream of the large family of transforming growth factor beta and bone morphogenetic protein (BMP) cytokines. This Danio rerio (Zebrafish) protein is Importin-8 (ipo8).